The sequence spans 321 residues: 4-hydroxy-3-methylbut-2-enyl diphosphate reductase (321 aa).

Position 13 (Cys-13) interacts with [4Fe-4S] cluster. (2E)-4-hydroxy-3-methylbut-2-enyl diphosphate contacts are provided by His-41 and His-75. Dimethylallyl diphosphate contacts are provided by His-41 and His-75. His-41 and His-75 together coordinate isopentenyl diphosphate. Residue Cys-97 participates in [4Fe-4S] cluster binding. His-125 contacts (2E)-4-hydroxy-3-methylbut-2-enyl diphosphate. Dimethylallyl diphosphate is bound at residue His-125. Residue His-125 participates in isopentenyl diphosphate binding. Glu-127 (proton donor) is an active-site residue. Thr-168 is a (2E)-4-hydroxy-3-methylbut-2-enyl diphosphate binding site. Cys-225 is a binding site for [4Fe-4S] cluster. Positions 253, 254, 255, and 302 each coordinate (2E)-4-hydroxy-3-methylbut-2-enyl diphosphate. Dimethylallyl diphosphate contacts are provided by Ser-253, Ser-254, Asn-255, and Ser-302. Isopentenyl diphosphate contacts are provided by Ser-253, Ser-254, Asn-255, and Ser-302.

This sequence belongs to the IspH family. [4Fe-4S] cluster serves as cofactor.

It catalyses the reaction isopentenyl diphosphate + 2 oxidized [2Fe-2S]-[ferredoxin] + H2O = (2E)-4-hydroxy-3-methylbut-2-enyl diphosphate + 2 reduced [2Fe-2S]-[ferredoxin] + 2 H(+). The catalysed reaction is dimethylallyl diphosphate + 2 oxidized [2Fe-2S]-[ferredoxin] + H2O = (2E)-4-hydroxy-3-methylbut-2-enyl diphosphate + 2 reduced [2Fe-2S]-[ferredoxin] + 2 H(+). It functions in the pathway isoprenoid biosynthesis; dimethylallyl diphosphate biosynthesis; dimethylallyl diphosphate from (2E)-4-hydroxy-3-methylbutenyl diphosphate: step 1/1. The protein operates within isoprenoid biosynthesis; isopentenyl diphosphate biosynthesis via DXP pathway; isopentenyl diphosphate from 1-deoxy-D-xylulose 5-phosphate: step 6/6. Its function is as follows. Catalyzes the conversion of 1-hydroxy-2-methyl-2-(E)-butenyl 4-diphosphate (HMBPP) into a mixture of isopentenyl diphosphate (IPP) and dimethylallyl diphosphate (DMAPP). Acts in the terminal step of the DOXP/MEP pathway for isoprenoid precursor biosynthesis. The sequence is that of 4-hydroxy-3-methylbut-2-enyl diphosphate reductase from Pelodictyon phaeoclathratiforme (strain DSM 5477 / BU-1).